The primary structure comprises 625 residues: Chaperone protein HtpG (625 aa).

Positions Met-1–Arg-337 are a; substrate-binding. The interval Glu-338–Lys-552 is b. Residues Leu-553–Gln-625 form a c region.

This sequence belongs to the heat shock protein 90 family. Homodimer.

The protein localises to the cytoplasm. Its function is as follows. Molecular chaperone. Has ATPase activity. This Buchnera aphidicola subsp. Schizaphis graminum (strain Sg) protein is Chaperone protein HtpG.